The primary structure comprises 344 residues: MATPYVPVPMPIGNSASSFTTNRNQRSSSFGSVSTSSNSSKGQLEDSNMGNFKQTSVPDQMDNTSSVCSSPLIRTKFTGTASSIEYSTRPRDTEEQNPETVNWEDRPSTPTILGYEVMEERAKFTVYKILVKKTPEESWVVFRRYTDFSRLNDKLKEMFPGFRLALPPKRWFKDNYNADFLEDRQLGLQAFLQNLVAHKDIANCLAVREFLCLDDPPGPFDSLEESRAFCETLEETNYRLQKELLEKQKEMESLKKLLSEKQLHIDTLENRIRTLSLEPEESLDVSETEGEQILKVESSALEVDQDVLDEESRADNKPCLSFSEPENAVSEIEVAEVAYDAEED.

A compositionally biased stretch (pro residues) spans 1-10 (MATPYVPVPM). Disordered regions lie at residues 1-66 (MATP…NTSS) and 81-107 (ASSI…EDRP). Positions 14 to 26 (NSASSFTTNRNQR) are enriched in polar residues. Residues 27–40 (SSSFGSVSTSSNSS) show a composition bias toward low complexity. Over residues 41–66 (KGQLEDSNMGNFKQTSVPDQMDNTSS) the composition is skewed to polar residues. The 114-residue stretch at 105 to 218 (DRPSTPTILG…EFLCLDDPPG (114 aa)) folds into the PX domain. A 1,2-diacyl-sn-glycero-3-phospho-(1D-myo-inositol-3-phosphate) contacts are provided by arginine 144, threonine 146, and arginine 184. Serine 222 is modified (phosphoserine). Residues 223 to 278 (LEESRAFCETLEETNYRLQKELLEKQKEMESLKKLLSEKQLHIDTLENRIRTLSLE) are a coiled coil.

The protein belongs to the sorting nexin family. As to quaternary structure, homooligomer. Interacts with EGFR. In terms of tissue distribution, detected in placenta, lung, liver,heart and pancreas.

Its subcellular location is the early endosome membrane. The protein resides in the late endosome membrane. The protein localises to the cytoplasm. It is found in the lysosome. In terms of biological role, may be involved in several stages of intracellular trafficking. Plays a role in protein transport from early to late endosomes. Plays a role in protein transport to the lysosome. Promotes degradation of EGFR after EGF signaling. Plays a role in intracellular transport of vesicular stomatitis virus nucleocapsids from the endosome to the cytoplasm. The sequence is that of Sorting nexin-16 (SNX16) from Homo sapiens (Human).